Reading from the N-terminus, the 467-residue chain is MTNWLQKRVRLSPKETALVFEGKEETFEEISEAVKQLAGKLFALGIRKDEMVALLGKNDRMTFLLIHALQQLGAVTLFLNNRLTKKEISFQLANAEVKHVIVADSLVDKVATGISYATLAETDYEAPALLETWDLSRAASVMYTSGTTGKPKGVVQTYENHWWSAVASVLNLGLTEKDSWLCAVPIFHISGLSIMMRSVIYGIPVYLEEHFDEEKITQLLESGKISTISVVTSMLERLLKIHSGSYHPNVRTVLLGGGPASKAVLEICKQRDIPLVQSFGMTETASQIVTLPPKDALNKIGSSGKALFPAEVKIADDGEILLKGPSITPGYLHNKKATEASFVDGWFKTGDIGYLDEEGFLFVLERRSDLIISGGENIYPTEIEHVISEYEGVKEVAVIGKPDDKWGSVPVAFIVAEETFDEAELRLICETNLAGYKIPKQITIVEKLPKTASGKIQRNKLKERHSM.

Belongs to the ATP-dependent AMP-binding enzyme family. MenE subfamily.

It carries out the reaction 2-succinylbenzoate + ATP + CoA = 2-succinylbenzoyl-CoA + AMP + diphosphate. It functions in the pathway quinol/quinone metabolism; 1,4-dihydroxy-2-naphthoate biosynthesis; 1,4-dihydroxy-2-naphthoate from chorismate: step 5/7. Its pathway is quinol/quinone metabolism; menaquinone biosynthesis. Converts 2-succinylbenzoate (OSB) to 2-succinylbenzoyl-CoA (OSB-CoA). This Listeria monocytogenes serotype 4b (strain F2365) protein is 2-succinylbenzoate--CoA ligase.